A 236-amino-acid chain; its full sequence is Three prime repair exonuclease 2 (236 aa).

2 residues coordinate Mg(2+): D14 and E16. Substrate is bound by residues 16 to 17 (EA) and Y122. The active-site Proton donor/acceptor is the H188. D193 lines the Mg(2+) pocket. D193 provides a ligand contact to substrate.

Belongs to the exonuclease superfamily. TREX family. As to quaternary structure, homodimer. The cofactor is Mg(2+).

The protein resides in the nucleus. It carries out the reaction Exonucleolytic cleavage in the 3'- to 5'-direction to yield nucleoside 5'-phosphates.. Its function is as follows. Exonuclease with a preference for double-stranded DNA with mismatched 3' termini. May play a role in DNA repair. This is Three prime repair exonuclease 2 (Trex2) from Mus musculus (Mouse).